Consider the following 212-residue polypeptide: Proteasome subunit beta 2 (212 aa).

Residues 1 to 13 (MSVDEKVARALKG) constitute a propeptide, removed in mature form; by autocatalysis. The active-site Nucleophile is the Thr14.

Belongs to the peptidase T1B family. In terms of assembly, the 20S proteasome core is composed of 14 alpha and 14 beta subunits that assemble into four stacked heptameric rings, resulting in a barrel-shaped structure. The two inner rings, each composed of seven catalytic beta subunits, are sandwiched by two outer rings, each composed of seven alpha subunits. The catalytic chamber with the active sites is on the inside of the barrel. Has a gated structure, the ends of the cylinder being occluded by the N-termini of the alpha-subunits. Is capped at one or both ends by the proteasome regulatory ATPase, PAN.

It localises to the cytoplasm. The enzyme catalyses Cleavage of peptide bonds with very broad specificity.. With respect to regulation, the formation of the proteasomal ATPase PAN-20S proteasome complex, via the docking of the C-termini of PAN into the intersubunit pockets in the alpha-rings, triggers opening of the gate for substrate entry. Interconversion between the open-gate and close-gate conformations leads to a dynamic regulation of the 20S proteasome proteolysis activity. Component of the proteasome core, a large protease complex with broad specificity involved in protein degradation. The sequence is that of Proteasome subunit beta 2 from Ignicoccus hospitalis (strain KIN4/I / DSM 18386 / JCM 14125).